The chain runs to 322 residues: 5'-AMP-activated protein kinase subunit gamma (322 aa).

CBS domains follow at residues 37–97 (VSYR…NPDK), 118–181 (VDQL…CRET), 194–253 (ITQD…YNDL), and 262–322 (MRRS…LGSN). ADP contacts are provided by residues isoleucine 42, arginine 146, 166–169 (TQYR), and threonine 195. Residues threonine 195, lysine 200, and 221-222 (SS) each bind AMP. ATP-binding positions include threonine 195, lysine 200, and 221-222 (SS). Residues 221–222 (SS), 291–293 (RVH), and 309–312 (TLSD) contribute to the ADP site. 309–312 (TLSD) is an AMP binding site. 309–312 (TLSD) lines the ATP pocket.

The protein belongs to the 5'-AMP-activated protein kinase gamma subunit family. As to quaternary structure, AMPK is a heterotrimer of an alpha catalytic subunit (SNF1), a beta (SIP1, SIP2 or GAL83) and a gamma non-catalytic subunits (SNF4). Note=Interaction between SNF1 and SNF4 is inhibited by high levels of glucose.

The protein resides in the nucleus. The protein localises to the cytoplasm. In terms of biological role, adenine nucleotides-binding subunit gamma of AMP-activated protein kinase (AMPK), an energy sensor protein kinase that plays a key role in regulating cellular energy metabolism. In response to reduction of intracellular ATP levels, AMPK activates energy-producing pathways and inhibits energy-consuming processes: inhibits protein, carbohydrate and lipid biosynthesis, as well as cell growth and proliferation. AMPK acts via direct phosphorylation of metabolic enzymes, and by longer-term effects via phosphorylation of transcription regulators. Gamma non-catalytic subunit mediates binding to AMP, ADP and ATP, leading to activate or inhibit AMPK: AMP-binding results in allosteric activation of alpha catalytic subunit (SNF1) both by inducing phosphorylation and preventing dephosphorylation of catalytic subunits. The polypeptide is 5'-AMP-activated protein kinase subunit gamma (SNF4) (Saccharomyces cerevisiae (strain ATCC 204508 / S288c) (Baker's yeast)).